The primary structure comprises 618 residues: Tyrosine-protein kinase ZAP-70 (618 aa).

The SH2 1 domain maps to 10–102 (FFYGSISRAE…GLPCNLRKPC (93 aa)). Positions 103-162 (NRPPGLEPQPGVFDCLRDAMVRDYVRQTWKLEGDALEQAIISQAPQVEKLIATTAHERMP) are interdomain A. An SH2 2 domain is found at 163 to 254 (WYHSSLTREE…GLIYRLKEVC (92 aa)). Position 248 is a phosphotyrosine (tyrosine 248). Residues 255–336 (PNSSASAAVA…KKLFLKRENL (82 aa)) are interdomain B. A disordered region spans residues 270–320 (AHPSTFTQPQRRVDTLNSDGYTPEPARLASSTDKPRPMPMDTSVYESPYSD). Residues 273–289 (STFTQPQRRVDTLNSDG) are compositionally biased toward polar residues. A Phosphoserine modification is found at serine 287. Residue tyrosine 290 is modified to Phosphotyrosine. Phosphotyrosine; by LCK is present on tyrosine 314. Tyrosine 318 bears the Phosphotyrosine mark. In terms of domain architecture, Protein kinase spans 337 to 597 (LVADIELGCG…VEQRMRNYYY (261 aa)). ATP contacts are provided by residues 343 to 351 (LGCGNFGSV) and lysine 368. Aspartate 460 functions as the Proton acceptor in the catalytic mechanism. Residues tyrosine 491 and tyrosine 492 each carry the phosphotyrosine modification. Lysine 543 participates in a covalent cross-link: Glycyl lysine isopeptide (Lys-Gly) (interchain with G-Cter in ubiquitin).

The protein belongs to the protein kinase superfamily. Tyr protein kinase family. SYK/ZAP-70 subfamily. Interacts with CD247/CD3Z; this interaction docks ZAP70 at the stimulated TCR. Interacts with NFAM1. Interacts with adapter protein SLA; this interaction negatively regulates T-cell receptor signaling. Interacts with VAV1. Interacts with CBL; this interaction promotes ubiquitination, internalization and subsequent degradation of CD247/CD3Z. Identified in a complex with CBL and UBE2L3. Interacts with SHB. Interacts with adapter protein SLA2; this interaction negatively regulates T-cell receptor signaling. Interacts with CBLB. Interacts (via SH2 domains) with RHOH; this interaction regulates ZAP70 subcellular localization. Interacts with DEF6. Interacts (ubiquitinated form) with OTUD7B and UBASH3B. In terms of processing, phosphorylated on tyrosine residues upon T-cell antigen receptor (TCR) stimulation. Phosphorylation of Tyr-314 and Tyr-314 are essential for ZAP70 positive function on T-lymphocyte activation whereas Tyr-290 has a negative regulatory role. Within the C-terminal kinase domain, Tyr-491 and Tyr-492 are phosphorylated after TCR induction, Tyr-491 playing a negative regulatory role and Tyr-492 a positive. Tyr-492 is dephosphorylated by PTN22. Ubiquitinated in response to T cell activation. Deubiquitinated by OTUD7B. As to expression, isoform 1 and isoform 2 are expressed in thymus, spleen and lymph nodes.

It localises to the cytoplasm. It is found in the cell membrane. The catalysed reaction is L-tyrosyl-[protein] + ATP = O-phospho-L-tyrosyl-[protein] + ADP + H(+). With respect to regulation, activated by phosphorylation at Tyr-492 in the activation loop. Tyrosine kinase that plays an essential role in regulation of the adaptive immune response. Regulates motility, adhesion and cytokine expression of mature T-cells, as well as thymocyte development. Also contributes to the development and activation of primary B-lymphocytes. When antigen presenting cells (APC) activate T-cell receptor (TCR), a serie of phosphorylations lead to the recruitment of ZAP70 to the doubly phosphorylated TCR component CD3Z through ITAM motif at the plasma membrane. This recruitment serves to localization to the stimulated TCR and to relieve its autoinhibited conformation. Release of ZAP70 active conformation is further stabilized by phosphorylation mediated by LCK. Subsequently, ZAP70 phosphorylates at least 2 essential adapter proteins: LAT and LCP2. In turn, a large number of signaling molecules are recruited and ultimately lead to lymphokine production, T-cell proliferation and differentiation. Furthermore, ZAP70 controls cytoskeleton modifications, adhesion and mobility of T-lymphocytes, thus ensuring correct delivery of effectors to the APC. ZAP70 is also required for TCR-CD3Z internalization and degradation through interaction with the E3 ubiquitin-protein ligase CBL and adapter proteins SLA and SLA2. Thus, ZAP70 regulates both T-cell activation switch on and switch off by modulating TCR expression at the T-cell surface. During thymocyte development, ZAP70 promotes survival and cell-cycle progression of developing thymocytes before positive selection (when cells are still CD4/CD8 double negative). Additionally, ZAP70-dependent signaling pathway may also contribute to primary B-cells formation and activation through B-cell receptor (BCR). This Mus musculus (Mouse) protein is Tyrosine-protein kinase ZAP-70 (Zap70).